The sequence spans 158 residues: GTP-dependent dephospho-CoA kinase (158 aa).

GTP is bound by residues Asp-35, Ile-36, Val-37, Asp-54, Lys-56, Glu-109, and Asp-132.

The protein belongs to the GTP-dependent DPCK family.

The enzyme catalyses 3'-dephospho-CoA + GTP = GDP + CoA + H(+). It participates in cofactor biosynthesis; coenzyme A biosynthesis. Its function is as follows. Catalyzes the GTP-dependent phosphorylation of the 3'-hydroxyl group of dephosphocoenzyme A to form coenzyme A (CoA). This Methanocaldococcus jannaschii (strain ATCC 43067 / DSM 2661 / JAL-1 / JCM 10045 / NBRC 100440) (Methanococcus jannaschii) protein is GTP-dependent dephospho-CoA kinase.